Here is a 210-residue protein sequence, read N- to C-terminus: Thiamine-phosphate synthase (210 aa).

4-amino-2-methyl-5-(diphosphooxymethyl)pyrimidine is bound by residues 39–43 (QLREK) and N71. Mg(2+) contacts are provided by D72 and D91. Residue S110 coordinates 4-amino-2-methyl-5-(diphosphooxymethyl)pyrimidine. Residue 134–136 (TPT) coordinates 2-[(2R,5Z)-2-carboxy-4-methylthiazol-5(2H)-ylidene]ethyl phosphate. Residue K137 participates in 4-amino-2-methyl-5-(diphosphooxymethyl)pyrimidine binding. G163 contributes to the 2-[(2R,5Z)-2-carboxy-4-methylthiazol-5(2H)-ylidene]ethyl phosphate binding site.

The protein belongs to the thiamine-phosphate synthase family. Mg(2+) serves as cofactor.

It carries out the reaction 2-[(2R,5Z)-2-carboxy-4-methylthiazol-5(2H)-ylidene]ethyl phosphate + 4-amino-2-methyl-5-(diphosphooxymethyl)pyrimidine + 2 H(+) = thiamine phosphate + CO2 + diphosphate. The enzyme catalyses 2-(2-carboxy-4-methylthiazol-5-yl)ethyl phosphate + 4-amino-2-methyl-5-(diphosphooxymethyl)pyrimidine + 2 H(+) = thiamine phosphate + CO2 + diphosphate. The catalysed reaction is 4-methyl-5-(2-phosphooxyethyl)-thiazole + 4-amino-2-methyl-5-(diphosphooxymethyl)pyrimidine + H(+) = thiamine phosphate + diphosphate. Its pathway is cofactor biosynthesis; thiamine diphosphate biosynthesis; thiamine phosphate from 4-amino-2-methyl-5-diphosphomethylpyrimidine and 4-methyl-5-(2-phosphoethyl)-thiazole: step 1/1. In terms of biological role, condenses 4-methyl-5-(beta-hydroxyethyl)thiazole monophosphate (THZ-P) and 2-methyl-4-amino-5-hydroxymethyl pyrimidine pyrophosphate (HMP-PP) to form thiamine monophosphate (TMP). This chain is Thiamine-phosphate synthase, found in Campylobacter jejuni subsp. jejuni serotype O:6 (strain 81116 / NCTC 11828).